A 67-amino-acid polypeptide reads, in one-letter code: Protein LITTLE ZIPPER 3 (67 aa).

The stretch at 14–59 (YIMKENERLRKKAELLNQENQQLLFQLKQKLSKTKNSNNGSNNDNK) forms a coiled coil. The interval 42-67 (QKLSKTKNSNNGSNNDNKSSSASGQS) is disordered.

In terms of assembly, interacts with REV. Interacts with ATBH-8, ATBH-9, ATB-14 and ATB-15. As to expression, expressed in the adaxial epidermis of the cotyledons and leaves, and in the vascular cylinder of wild-type torpedo stage embryos. Confined in the central zone and the organizing center in the shoot apical meristem.

It is found in the nucleus. Its function is as follows. Competitive inhibitor of the HD-ZIPIII transcription factors in shoot apical meristem (SAM) development. Acts by forming non-functional heterodimers. Part of a negative feedback loop. Involved in SAM development and lateral organ patterning. Essential for proper functioning of stem cells in the SAM. The protein is Protein LITTLE ZIPPER 3 of Arabidopsis thaliana (Mouse-ear cress).